The sequence spans 95 residues: MPRSLKKGPFVDDHLLKKVDAQNERREKRVIKTWSRRSTIVPEMIGHTIAVHNGKQHVPVFINEQMIGHKLGEFSPTRTYRGHGADKNAKGSKKK.

A disordered region spans residues 73–95 (EFSPTRTYRGHGADKNAKGSKKK).

The protein belongs to the universal ribosomal protein uS19 family.

In terms of biological role, protein S19 forms a complex with S13 that binds strongly to the 16S ribosomal RNA. This is Small ribosomal subunit protein uS19 from Deinococcus geothermalis (strain DSM 11300 / CIP 105573 / AG-3a).